The chain runs to 441 residues: 3'-N-debenzoyl-2'-deoxytaxol N-benzoyltransferase (441 aa).

Active-site proton acceptor residues include histidine 163 and aspartate 373.

Belongs to the plant acyltransferase family.

The enzyme catalyses 3'-N-debenzoyltaxol + benzoyl-CoA = paclitaxel + CoA + H(+). It participates in alkaloid biosynthesis; taxol biosynthesis. Catalyzes the stereoselective coupling of the surrogate substrate N-debenzoyl-(3'RS)-2'-deoxytaxol with benzoyl-CoA to form predominantly one 3'-epimer of 2'-deoxytaxol. This enzymatic reaction constitutes the final acylation in the taxol biosynthetic pathway. The chain is 3'-N-debenzoyl-2'-deoxytaxol N-benzoyltransferase from Taxus canadensis (Canadian yew).